Reading from the N-terminus, the 90-residue chain is Small ribosomal subunit protein uS17 (90 aa).

Belongs to the universal ribosomal protein uS17 family. In terms of assembly, part of the 30S ribosomal subunit.

Functionally, one of the primary rRNA binding proteins, it binds specifically to the 5'-end of 16S ribosomal RNA. This Cutibacterium acnes (strain DSM 16379 / KPA171202) (Propionibacterium acnes) protein is Small ribosomal subunit protein uS17.